We begin with the raw amino-acid sequence, 268 residues long: NH(3)-dependent NAD(+) synthetase (268 aa).

46–53 lines the ATP pocket; it reads GVSGGQDS. Position 52 (aspartate 52) interacts with Mg(2+). Arginine 140 contributes to the deamido-NAD(+) binding site. Threonine 160 lines the ATP pocket. Glutamate 165 provides a ligand contact to Mg(2+). 2 residues coordinate deamido-NAD(+): lysine 173 and aspartate 180. Lysine 189 is an ATP binding site. Residue 260–261 coordinates deamido-NAD(+); that stretch reads HK.

Belongs to the NAD synthetase family. Homodimer.

It catalyses the reaction deamido-NAD(+) + NH4(+) + ATP = AMP + diphosphate + NAD(+) + H(+). Its pathway is cofactor biosynthesis; NAD(+) biosynthesis; NAD(+) from deamido-NAD(+) (ammonia route): step 1/1. Its function is as follows. Catalyzes the ATP-dependent amidation of deamido-NAD to form NAD. Uses ammonia as a nitrogen source. This chain is NH(3)-dependent NAD(+) synthetase, found in Buchnera aphidicola subsp. Acyrthosiphon pisum (strain Tuc7).